The sequence spans 237 residues: B3 domain-containing protein Os06g0194400 (237 aa).

2 disordered regions span residues 1–23 (MIEA…RQVE) and 38–82 (SAAV…LPEK). The segment at residues 139–230 (FVKPMLQSHV…KFKVYIIRAS (92 aa)) is a DNA-binding region (TF-B3).

The protein localises to the nucleus. This is B3 domain-containing protein Os06g0194400 from Oryza sativa subsp. japonica (Rice).